The chain runs to 196 residues: ATP-dependent Clp protease proteolytic subunit (196 aa).

S101 serves as the catalytic Nucleophile. H126 is a catalytic residue.

It belongs to the peptidase S14 family. Component of the chloroplastic Clp protease core complex.

It localises to the plastid. The protein resides in the chloroplast stroma. It carries out the reaction Hydrolysis of proteins to small peptides in the presence of ATP and magnesium. alpha-casein is the usual test substrate. In the absence of ATP, only oligopeptides shorter than five residues are hydrolyzed (such as succinyl-Leu-Tyr-|-NHMec, and Leu-Tyr-Leu-|-Tyr-Trp, in which cleavage of the -Tyr-|-Leu- and -Tyr-|-Trp bonds also occurs).. In terms of biological role, cleaves peptides in various proteins in a process that requires ATP hydrolysis. Has a chymotrypsin-like activity. Plays a major role in the degradation of misfolded proteins. In Nasturtium officinale (Watercress), this protein is ATP-dependent Clp protease proteolytic subunit.